A 173-amino-acid chain; its full sequence is Archaemetzincin (173 aa).

Position 130 (His130) interacts with Zn(2+). Glu131 serves as the catalytic Proton acceptor. Zn(2+) contacts are provided by His134, His140, Cys141, Cys146, Cys165, and Cys168.

Belongs to the peptidase M54 family. As to quaternary structure, monomer. Zn(2+) serves as cofactor.

In terms of biological role, probable zinc metalloprotease whose natural substrate is unknown. This chain is Archaemetzincin, found in Haloarcula marismortui (strain ATCC 43049 / DSM 3752 / JCM 8966 / VKM B-1809) (Halobacterium marismortui).